The sequence spans 215 residues: Thiamine-phosphate synthase (215 aa).

Residues 40–44 and Asn72 contribute to the 4-amino-2-methyl-5-(diphosphooxymethyl)pyrimidine site; that span reads QLRIK. Residues Asp73 and Asp92 each coordinate Mg(2+). Ser111 contributes to the 4-amino-2-methyl-5-(diphosphooxymethyl)pyrimidine binding site. 2-[(2R,5Z)-2-carboxy-4-methylthiazol-5(2H)-ylidene]ethyl phosphate is bound at residue 137–139; it reads TTT. Lys140 contributes to the 4-amino-2-methyl-5-(diphosphooxymethyl)pyrimidine binding site. Residues Gly169 and 189–190 each bind 2-[(2R,5Z)-2-carboxy-4-methylthiazol-5(2H)-ylidene]ethyl phosphate; that span reads VS.

It belongs to the thiamine-phosphate synthase family. Mg(2+) serves as cofactor.

The catalysed reaction is 2-[(2R,5Z)-2-carboxy-4-methylthiazol-5(2H)-ylidene]ethyl phosphate + 4-amino-2-methyl-5-(diphosphooxymethyl)pyrimidine + 2 H(+) = thiamine phosphate + CO2 + diphosphate. The enzyme catalyses 2-(2-carboxy-4-methylthiazol-5-yl)ethyl phosphate + 4-amino-2-methyl-5-(diphosphooxymethyl)pyrimidine + 2 H(+) = thiamine phosphate + CO2 + diphosphate. It catalyses the reaction 4-methyl-5-(2-phosphooxyethyl)-thiazole + 4-amino-2-methyl-5-(diphosphooxymethyl)pyrimidine + H(+) = thiamine phosphate + diphosphate. The protein operates within cofactor biosynthesis; thiamine diphosphate biosynthesis; thiamine phosphate from 4-amino-2-methyl-5-diphosphomethylpyrimidine and 4-methyl-5-(2-phosphoethyl)-thiazole: step 1/1. In terms of biological role, condenses 4-methyl-5-(beta-hydroxyethyl)thiazole monophosphate (THZ-P) and 2-methyl-4-amino-5-hydroxymethyl pyrimidine pyrophosphate (HMP-PP) to form thiamine monophosphate (TMP). This is Thiamine-phosphate synthase from Proteus mirabilis (strain HI4320).